The following is a 495-amino-acid chain: DNA double-strand break repair helicase HerA (495 aa).

Residues R141, 150 to 155 (GSGKSN), and 458 to 459 (KI) each bind ATP.

Belongs to the HerA family. As to quaternary structure, forms a hexamer or a heptamer. Interacts with Mre11.

The catalysed reaction is Couples ATP hydrolysis with the unwinding of duplex DNA at the replication fork by translocating in the 5'-3' direction. This creates two antiparallel DNA single strands (ssDNA). The leading ssDNA polymer is the template for DNA polymerase III holoenzyme which synthesizes a continuous strand.. The enzyme catalyses ATP + H2O = ADP + phosphate + H(+). It carries out the reaction Couples ATP hydrolysis with the unwinding of duplex DNA by translocating in the 3'-5' direction.. With respect to regulation, ATPase activity is slightly stimulated by either circular single- or double-stranded (ds)DNA with a weak preference for dsDNA. Helicase activity is stimulated by Mre11. Its function is as follows. Involved in DNA double-strand break (DSB) repair. Probably acts with NurA to stimulate resection of the 5' strand and produce the long 3' single-strand that is required for RadA loading. Has DNA-dependent ATPase activity and bidirectional DNA helicase activity. Loads on either a 3' or a 5' DNA tail for subsequent DNA unwinding. Can also unwind blunt-ended dsDNA, Holliday junction and splayed-arm DNA. In Sulfurisphaera tokodaii (strain DSM 16993 / JCM 10545 / NBRC 100140 / 7) (Sulfolobus tokodaii), this protein is DNA double-strand break repair helicase HerA.